The sequence spans 395 residues: Ribose-phosphate pyrophosphokinase 2, chloroplastic (395 aa).

Over residues 1 to 23 the composition is skewed to low complexity; sequence MASPAPRSLSSSSSSSSSSFCPS. The segment at 1 to 33 is disordered; that stretch reads MASPAPRSLSSSSSSSSSSFCPSISPPPRSPSR. The transit peptide at 1-42 directs the protein to the chloroplast; that stretch reads MASPAPRSLSSSSSSSSSSFCPSISPPPRSPSRASLPFSVKC. D209, H211, D220, and D224 together coordinate Mg(2+). Residues 295 to 310 form a binding of phosphoribosylpyrophosphate region; it reads GKVAVMLDDMIDTAGT.

This sequence belongs to the ribose-phosphate pyrophosphokinase family.

It localises to the plastid. The protein localises to the chloroplast. The enzyme catalyses D-ribose 5-phosphate + ATP = 5-phospho-alpha-D-ribose 1-diphosphate + AMP + H(+). The chain is Ribose-phosphate pyrophosphokinase 2, chloroplastic (PRS2) from Spinacia oleracea (Spinach).